The sequence spans 666 residues: Spartin (666 aa).

Methionine 1 is modified (N-acetylmethionine). An MIT domain is found at 16–94 (IREAYKKAFL…LQNVRTRLEI (79 aa)). Positions 124–156 (EKLPEPQSFSSAPQHAEVNGNTSTPSAGAVAAP) are disordered. Residues 146–156 (STPSAGAVAAP) show a composition bias toward low complexity. Residues 190–380 (DSGEFSSVGE…QLDQGNKDVR (191 aa)) form a ubiquitin-binding region (UBR) domain region. The LC3-interacting region (LIR); mediates interaction with MAP1LC3A AND MAP1LC3C motif lies at 193–200 (EFSSVGEE). Residues 344–398 (EENEFQIPGRTRPSSDQLKEASGTDVKQLDQGNKDVRHKGKRGKRAKDTSSEEVN) are disordered. Residue lysine 362 forms a Glycyl lysine isopeptide (Lys-Gly) (interchain with G-Cter in ubiquitin) linkage. A compositionally biased stretch (basic residues) spans 379 to 388 (VRHKGKRGKR). One can recognise a Senescence domain in the interval 427 to 611 (ILSGASWVSW…YNINNIGIKA (185 aa)). The tract at residues 431–503 (ASWVSWGLVK…LVDGVCTVAN (73 aa)) is required for localization to lipid droplets. The residue at position 470 (serine 470) is a Phosphoserine. The tract at residues 636-666 (RENQEGAANVNVRGEKDEQTKEVKEAKKKDK) is disordered. Over residues 648-666 (RGEKDEQTKEVKEAKKKDK) the composition is skewed to basic and acidic residues.

Interacts with ITCH and WWP1. Interacts (via MIT domain) with IST1; leading to the recruitment of SPART to midbodies. Interacts with MAP1LC3A and MAP1LC3C. In terms of processing, ubiquitinated; ubiquitination does not require ITCH and WWP1. Ubiquitously expressed, with highest levels of expression detected in adipose tissue.

Its subcellular location is the cytoplasm. It localises to the midbody. The protein localises to the lipid droplet. In terms of biological role, lipophagy receptor that plays an important role in lipid droplet (LD) turnover in motor neurons. Localizes to LDs and interacts with components of the autophagy machinery, such as MAP1LC3A/C proteins to deliver LDs to autophagosomes for degradation via lipophagy. Lipid transfer protein required for lipid droplet degradation, including by lipophagy. Can bind and transfer all lipid species found in lipid droplets, from phospholipids to triglycerides and sterol esters but the direction of lipid transfer by spartin and its cargos are unknown. May be implicated in endosomal trafficking, or microtubule dynamics, or both. Participates in cytokinesis. In Homo sapiens (Human), this protein is Spartin.